The primary structure comprises 1697 residues: Histone acetyltransferase HAC1 (1697 aa).

Polar residues predominate over residues 1-16 (MNVQAHMSGQVSNQGT). 6 disordered regions span residues 1–45 (MNVQ…LGPS), 202–221 (SNFG…QRNT), 385–439 (SFQA…QQQR), 555–574 (HWQS…SNER), 583–631 (RMSG…GNRD), and 843–901 (IGIA…GKPE). 2 stretches are compositionally biased toward low complexity: residues 17–28 (MSQQNGNSQMQN) and 202–217 (SNFG…SMSS). Polar residues predominate over residues 385–398 (SFQAVSRTSSSLSH). The span at 399–439 (QQQQFQQQPNRFQQQPNQFHQQQQQFLHQQQLKQQSQQQQR) shows a compositional bias: low complexity. 2 stretches are compositionally biased toward polar residues: residues 556–571 (WQSQ…NSMS) and 584–628 (MSGT…NGNG). A TAZ-type 1 zinc finger spans residues 629 to 709 (NRDPRFKNQQ…EPNCPVCIPV (81 aa)). Residues 873–901 (TKVEKEPESLKKENLAESTEHTSKSGKPE) show a composition bias toward basic and acidic residues. The PHD-type zinc-finger motif lies at 989–1066 (HYFCIPCYNE…EYTCPYCFIA (78 aa)). Residues 1081–1517 (VLGAKDLPRT…VLYHLHNPTA (437 aa)) enclose the CBP/p300-type HAT domain. Acetyl-CoA is bound by residues 1204-1206 (LDS), 1223-1224 (RT), and W1279. ZZ-type zinc fingers lie at residues 1399-1462 (HLQP…IMDI) and 1519-1572 (AFVT…SLAD). Zn(2+) contacts are provided by C1404, C1407, C1419, C1422, C1428, C1431, H1444, H1452, C1524, C1527, C1539, C1542, C1548, C1551, H1560, and H1562. The TAZ-type 2 zinc finger occupies 1579-1662 (EARQLRVLQL…ECHVPRCRDL (84 aa)).

As to expression, rosette leaves, stems and flowers.

The protein localises to the nucleus. It catalyses the reaction L-lysyl-[protein] + acetyl-CoA = N(6)-acetyl-L-lysyl-[protein] + CoA + H(+). Its function is as follows. Acetyltransferase enzyme. Acetylates histones, giving a specific tag for transcriptional activation. This Arabidopsis thaliana (Mouse-ear cress) protein is Histone acetyltransferase HAC1 (HAC1).